A 150-amino-acid chain; its full sequence is Large ribosomal subunit protein bL9 (150 aa).

This sequence belongs to the bacterial ribosomal protein bL9 family.

Binds to the 23S rRNA. The protein is Large ribosomal subunit protein bL9 of Neisseria meningitidis serogroup C (strain 053442).